The chain runs to 941 residues: RNA-directed RNA polymerase (941 aa).

The segment at 875-918 (SARQGGMGLPPPPPPPLGGGGMAGPPPPPFMGLRPESSVPTSVP) is disordered. Residues 905–918 (MGLRPESSVPTSVP) show a composition bias toward low complexity.

In terms of assembly, forms a ribonucleoprotein complex with the 23S RNA, where a single polymerase molecule binds to a single viral RNA genome. Since the viral RNA is not encapsidated, ribonucleoprotein complex formation appears to be the strategy to survive in the host as persistent virus.

It is found in the host cytoplasm. It catalyses the reaction RNA(n) + a ribonucleoside 5'-triphosphate = RNA(n+1) + diphosphate. Functionally, RNA-directed RNA polymerase that replicates the viral (+) and (-) genome. This Saccharomyces 23S RNA narnavirus (ScNV-23S) protein is RNA-directed RNA polymerase.